The following is a 235-amino-acid chain: Phosphoribosylaminoimidazole-succinocarboxamide synthase (235 aa).

Belongs to the SAICAR synthetase family.

The catalysed reaction is 5-amino-1-(5-phospho-D-ribosyl)imidazole-4-carboxylate + L-aspartate + ATP = (2S)-2-[5-amino-1-(5-phospho-beta-D-ribosyl)imidazole-4-carboxamido]succinate + ADP + phosphate + 2 H(+). It participates in purine metabolism; IMP biosynthesis via de novo pathway; 5-amino-1-(5-phospho-D-ribosyl)imidazole-4-carboxamide from 5-amino-1-(5-phospho-D-ribosyl)imidazole-4-carboxylate: step 1/2. This Streptococcus thermophilus (strain ATCC BAA-250 / LMG 18311) protein is Phosphoribosylaminoimidazole-succinocarboxamide synthase.